The chain runs to 485 residues: Beta-amyrin 28-monooxygenase CYP716A378 (485 aa).

The helical; Signal-anchor for type II membrane protein transmembrane segment at 3–23 threads the bilayer; it reads LFFICGLVLFSTLSLISLFLL. Asparagine 25 and asparagine 386 each carry an N-linked (GlcNAc...) asparagine glycan. Cysteine 426 is a binding site for heme.

Belongs to the cytochrome P450 family. It depends on heme as a cofactor. Mainly expressed in flowers and flower buds, to a lesser extent in young leaves and, at low levels, in old leaves, stems and roots.

The protein resides in the membrane. The catalysed reaction is beta-amyrin + 3 reduced [NADPH--hemoprotein reductase] + 3 O2 = oleanolate + 3 oxidized [NADPH--hemoprotein reductase] + 4 H2O + 4 H(+). The protein operates within secondary metabolite biosynthesis; terpenoid biosynthesis. In terms of biological role, component of the oleanane-type triterpene saponins (e.g. saponarioside A and saponarioside B) biosynthetic pathway, leading to the production of natural products with detergent properties used as traditional sources of soap. An oxidoreductase that facilitates the oxidation of the methyl group to a carboxyl group at the C-28 position of beta-amyrin, resulting in the formation of oleanolate. The polypeptide is Beta-amyrin 28-monooxygenase CYP716A378 (Saponaria officinalis (Common soapwort)).